The chain runs to 536 residues: Light-independent protochlorophyllide reductase subunit B (536 aa).

Asp-36 contacts [4Fe-4S] cluster. Asp-292 functions as the Proton donor in the catalytic mechanism. 427-428 (GL) serves as a coordination point for substrate. The span at 448–469 (SHLGHLGGHQSQTEQQQSQAAT) shows a compositional bias: low complexity. The tract at residues 448-489 (SHLGHLGGHQSQTEQQQSQAATNPSTQSNADSSSEESPLWTP) is disordered. Residues 470-483 (NPSTQSNADSSSEE) are compositionally biased toward polar residues.

Belongs to the ChlB/BchB/BchZ family. In terms of assembly, protochlorophyllide reductase is composed of three subunits; ChlL, ChlN and ChlB. Forms a heterotetramer of two ChlB and two ChlN subunits. [4Fe-4S] cluster is required as a cofactor.

The catalysed reaction is chlorophyllide a + oxidized 2[4Fe-4S]-[ferredoxin] + 2 ADP + 2 phosphate = protochlorophyllide a + reduced 2[4Fe-4S]-[ferredoxin] + 2 ATP + 2 H2O. It participates in porphyrin-containing compound metabolism; chlorophyll biosynthesis (light-independent). In terms of biological role, component of the dark-operative protochlorophyllide reductase (DPOR) that uses Mg-ATP and reduced ferredoxin to reduce ring D of protochlorophyllide (Pchlide) to form chlorophyllide a (Chlide). This reaction is light-independent. The NB-protein (ChlN-ChlB) is the catalytic component of the complex. This Prochlorococcus marinus (strain MIT 9313) protein is Light-independent protochlorophyllide reductase subunit B.